A 59-amino-acid polypeptide reads, in one-letter code: Single-pass membrane and coiled-coil domain-containing protein 4 (59 aa).

The tract at residues 1 to 23 (MRQLKGKPKKETSKDKKERKQAM) is disordered. Positions 9–22 (KKETSKDKKERKQA) are enriched in basic and acidic residues. Residues 9 to 31 (KKETSKDKKERKQAMQEARQQIT) adopt a coiled-coil conformation. Residues 32–52 (TVVLPTLAVVVALIVVFVYVA) form a helical membrane-spanning segment.

Belongs to the SMCO4 family.

Its subcellular location is the membrane. The chain is Single-pass membrane and coiled-coil domain-containing protein 4 (smco4) from Xenopus laevis (African clawed frog).